A 268-amino-acid polypeptide reads, in one-letter code: AB hydrolase superfamily protein YisY (268 aa).

An AB hydrolase-1 domain is found at 23-254 (PIIFLHGWPL…NSGHGAFYEE (232 aa)). Residues serine 96, aspartate 220, and histidine 248 contribute to the active site.

This sequence belongs to the AB hydrolase superfamily.

The protein is AB hydrolase superfamily protein YisY (yisY) of Bacillus subtilis (strain 168).